The primary structure comprises 776 residues: Glucocorticoid receptor (776 aa).

Polar residues predominate over residues 1–11 (MDSKESLTSPS). The segment at 1–25 (MDSKESLTSPSEEIPSSVHGQERGN) is disordered. The modulating stretch occupies residues 1-419 (MDSKESLTSP…LSAVGPPPKF (419 aa)). At threonine 8 the chain carries Phosphothreonine. An Omega-N-methylarginine modification is found at arginine 23. Residues serine 45, serine 113, and serine 134 each carry the phosphoserine modification. The disordered stretch occupies residues 157 to 178 (PETPSDVSSEQQNLKGQTGTNG). The segment covering 161–174 (SDVSSEQQNLKGQT) has biased composition (polar residues). Phosphoserine is present on residues serine 203, serine 211, and serine 226. Residue lysine 258 forms a Glycyl lysine isopeptide (Lys-Gly) (interchain with G-Cter in SUMO2) linkage. The residue at position 267 (serine 267) is a Phosphoserine. Residues lysine 277 and lysine 293 each participate in a glycyl lysine isopeptide (Lys-Gly) (interchain with G-Cter in SUMO); alternate cross-link. Glycyl lysine isopeptide (Lys-Gly) (interchain with G-Cter in SUMO2); alternate cross-links involve residues lysine 277 and lysine 293. Residues serine 307 and serine 404 each carry the phosphoserine modification. The nuclear receptor DNA-binding region spans 417 to 492 (PKFCLVCSDE…AGMNLEARKT (76 aa)). Residue lysine 418 forms a Glycyl lysine isopeptide (Lys-Gly) (interchain with G-Cter in ubiquitin) linkage. 2 NR C4-type zinc fingers span residues 420 to 440 (CLVC…CGSC) and 456 to 480 (CAGR…YRKC). Lysine 479, lysine 491, lysine 493, and lysine 494 each carry N6-acetyllysine. Residues 484–776 (GMNLEARKTK…NIKKLLFHQK (293 aa)) form an interaction with CLOCK region. Positions 486-522 (NLEARKTKKKIKGIQQTTTGISQETPENSANKTIVPA) are hinge. The NR LBD domain maps to 523–757 (TLPQLTPTPV…FPEMLAEIIT (235 aa)). The segment at 531-696 (PVSLLEVIEP…EIRMTYIKEL (166 aa)) is interaction with CRY1. Lysine 702 participates in a covalent cross-link: Glycyl lysine isopeptide (Lys-Gly) (interchain with G-Cter in SUMO).

The protein belongs to the nuclear hormone receptor family. NR3 subfamily. In terms of assembly, heteromultimeric cytoplasmic complex with HSP90AA1, HSPA1A/HSPA1B, and FKBP5 or another immunophilin such as PPID, STIP1, or the immunophilin homolog PPP5C. Upon ligand binding FKBP5 dissociates from the complex and FKBP4 takes its place, thereby linking the complex to dynein and mediating transport to the nucleus, where the complex dissociates. Probably forms a complex composed of chaperones HSP90 and HSP70, co-chaperones CDC37, PPP5C, TSC1 and client protein TSC2, CDK4, AKT, RAF1 and NR3C1; this complex does not contain co-chaperones STIP1/HOP and PTGES3/p23. Directly interacts with UNC45A. Binds to DNA as a homodimer, and as heterodimer with NR3C2 or the retinoid X receptor. Binds STAT5A and STAT5B homodimers and heterodimers. Interacts with NRIP1, POU2F1, POU2F2 and TRIM28. Interacts with several coactivator complexes, including the SMARCA4 complex, CREBBP/EP300, TADA2L (Ada complex) and p160 coactivators such as NCOA2 and NCOA6. Interaction with BAG1 inhibits transactivation. Interacts with HEXIM1 and TGFB1I1. Interacts with NCOA1. Interacts with NCOA3, SMARCA4, SMARCC1, SMARCD1, and SMARCE1. Interacts with CLOCK, CRY1 and CRY2 in a ligand-dependent fashion. Interacts with CIART. Interacts with RWDD3. Interacts with UBE2I/UBC9 and this interaction is enhanced in the presence of RWDD3. Interacts with GRIP1. Interacts with NR4A3 (via nuclear receptor DNA-binding domain), represses transcription activity of NR4A3 on the POMC promoter Nur response element (NurRE). Directly interacts with PNRC2 to attract and form a complex with UPF1 and DCP1A; the interaction leads to rapid mRNA degradation. Interacts with GSK3B. Interacts with FNIP1 and FNIP2. Interacts (via C-terminus) with NR3C1 (via C-terminus). Interacts with MCM3AP. Interacts (via domain NR LBD) with HSP90AA1 and HSP90AB1. In the absence of hormonal ligand, interacts with TACC1. In terms of processing, acetylation by CLOCK reduces its binding to glucocorticoid response elements and its transcriptional activity. Post-translationally, increased proteasome-mediated degradation in response to glucocorticoids. Phosphorylated in the absence of hormone; becomes hyperphosphorylated in the presence of glucocorticoid. The Ser-203, Ser-226 and Ser-404-phosphorylated forms are mainly cytoplasmic, and the Ser-211-phosphorylated form is nuclear. Phosphorylation at Ser-211 increases transcriptional activity. Phosphorylation at Ser-203, Ser-226 and Ser-404 decreases signaling capacity. Phosphorylation at Ser-404 may protect from glucocorticoid-induced apoptosis. Phosphorylation at Ser-203 and Ser-211 is not required in regulation of chromosome segregation. May be dephosphorylated by PPP5C, attenuates NR3C1 action. In terms of processing, sumoylation at Lys-277 and Lys-293 negatively regulates its transcriptional activity. Sumoylation at Lys-702 positively regulates its transcriptional activity in the presence of RWDD3. Sumoylation at Lys-277 and Lys-293 is dispensable whereas sumoylation at Lys-702 is critical for the stimulatory effect of RWDD3 on its transcriptional activity. Heat shock increases sumoylation in a RWDD3-dependent manner. Post-translationally, ubiquitinated by UBR5, leading to its degradation: UBR5 specifically recognizes and binds ligand-bound NR3C1 when it is not associated with coactivators (NCOAs). In presence of NCOAs, the UBR5-degron is not accessible, preventing its ubiquitination and degradation.

The protein localises to the cytoplasm. It localises to the nucleus. The protein resides in the mitochondrion. It is found in the cytoskeleton. Its subcellular location is the spindle. The protein localises to the microtubule organizing center. It localises to the centrosome. The protein resides in the chromosome. It is found in the nucleoplasm. Receptor for glucocorticoids (GC). Has a dual mode of action: as a transcription factor that binds to glucocorticoid response elements (GRE), both for nuclear and mitochondrial DNA, and as a modulator of other transcription factors. Affects inflammatory responses, cellular proliferation and differentiation in target tissues. Involved in chromatin remodeling. Plays a role in rapid mRNA degradation by binding to the 5' UTR of target mRNAs and interacting with PNRC2 in a ligand-dependent manner which recruits the RNA helicase UPF1 and the mRNA-decapping enzyme DCP1A, leading to RNA decay. Could act as a coactivator for STAT5-dependent transcription upon growth hormone (GH) stimulation and could reveal an essential role of hepatic GR in the control of body growth. Mediates glucocorticoid-induced apoptosis. Promotes accurate chromosome segregation during mitosis. May act as a tumor suppressor. May play a negative role in adipogenesis through the regulation of lipolytic and antilipogenic gene expression. The chain is Glucocorticoid receptor (NR3C1) from Tupaia belangeri (Common tree shrew).